The sequence spans 344 residues: Ion-translocating oxidoreductase complex subunit D (344 aa).

Transmembrane regions (helical) follow at residues 23-43 (LVLG…GPGT), 44-64 (LLNL…MLAL), 77-99 (SALV…WLTL), and 120-140 (PFNP…LEMT). Position 172 is an FMN phosphoryl threonine (Thr172). 5 consecutive transmembrane segments (helical) span residues 198–218 (LGSA…LFLL), 222–242 (LFTW…SLLF), 252–272 (GSPL…FIVT), 285–305 (LVFG…GGYP), and 306–326 (DGMA…DYYT).

The protein belongs to the NqrB/RnfD family. In terms of assembly, the complex is composed of six subunits: RnfA, RnfB, RnfC, RnfD, RnfE and RnfG. The cofactor is FMN.

The protein localises to the cell inner membrane. Its function is as follows. Part of a membrane-bound complex that couples electron transfer with translocation of ions across the membrane. This Pseudomonas aeruginosa (strain LESB58) protein is Ion-translocating oxidoreductase complex subunit D.